Consider the following 208-residue polypeptide: Small ribosomal subunit protein eS8 (208 aa).

The interval 1 to 23 is disordered; sequence MGISRDSAHKRRATGGKRKSLRK. Positions 8 to 23 are enriched in basic residues; it reads AHKRRATGGKRKSLRK.

The protein belongs to the eukaryotic ribosomal protein eS8 family. As to quaternary structure, component of the small ribosomal subunit. Identified in a IGF2BP1-dependent mRNP granule complex containing untranslated mRNAs. Part of the small subunit (SSU) processome, composed of more than 70 proteins and the RNA chaperone small nucleolar RNA (snoRNA) U3.

The protein localises to the cytoplasm. It localises to the membrane. The protein resides in the nucleus. Its subcellular location is the nucleolus. Component of the small ribosomal subunit. The ribosome is a large ribonucleoprotein complex responsible for the synthesis of proteins in the cell. Part of the small subunit (SSU) processome, first precursor of the small eukaryotic ribosomal subunit. During the assembly of the SSU processome in the nucleolus, many ribosome biogenesis factors, an RNA chaperone and ribosomal proteins associate with the nascent pre-rRNA and work in concert to generate RNA folding, modifications, rearrangements and cleavage as well as targeted degradation of pre-ribosomal RNA by the RNA exosome. The protein is Small ribosomal subunit protein eS8 (RpS8) of Drosophila melanogaster (Fruit fly).